The primary structure comprises 549 residues: CTP synthase (549 aa).

The interval 1-270 (MTKFVFVTGG…DRLICEELRL (270 aa)) is amidoligase domain. Serine 13 contributes to the CTP binding site. Serine 13 is a UTP binding site. ATP-binding positions include 14–19 (SLGKGI) and aspartate 71. Mg(2+)-binding residues include aspartate 71 and glutamate 144. CTP contacts are provided by residues 151–153 (DIE), 191–196 (KTKPTQ), and lysine 227. UTP is bound by residues 191-196 (KTKPTQ) and lysine 227. The Glutamine amidotransferase type-1 domain maps to 295–547 (TIGMVGKYVD…VEAALAAQRQ (253 aa)). Glycine 356 contributes to the L-glutamine binding site. Cysteine 383 acts as the Nucleophile; for glutamine hydrolysis in catalysis. Residues 384–387 (LGMQ), glutamate 407, and arginine 473 each bind L-glutamine. Active-site residues include histidine 520 and glutamate 522.

Belongs to the CTP synthase family. As to quaternary structure, homotetramer.

The catalysed reaction is UTP + L-glutamine + ATP + H2O = CTP + L-glutamate + ADP + phosphate + 2 H(+). It carries out the reaction L-glutamine + H2O = L-glutamate + NH4(+). It catalyses the reaction UTP + NH4(+) + ATP = CTP + ADP + phosphate + 2 H(+). It functions in the pathway pyrimidine metabolism; CTP biosynthesis via de novo pathway; CTP from UDP: step 2/2. With respect to regulation, allosterically activated by GTP, when glutamine is the substrate; GTP has no effect on the reaction when ammonia is the substrate. The allosteric effector GTP functions by stabilizing the protein conformation that binds the tetrahedral intermediate(s) formed during glutamine hydrolysis. Inhibited by the product CTP, via allosteric rather than competitive inhibition. Functionally, catalyzes the ATP-dependent amination of UTP to CTP with either L-glutamine or ammonia as the source of nitrogen. Regulates intracellular CTP levels through interactions with the four ribonucleotide triphosphates. The chain is CTP synthase from Cupriavidus metallidurans (strain ATCC 43123 / DSM 2839 / NBRC 102507 / CH34) (Ralstonia metallidurans).